The primary structure comprises 1186 residues: MYND-type zinc finger-containing chromatin reader ZMYND8 (1186 aa).

Positions 1 to 12 are enriched in basic and acidic residues; sequence MDISTRSKDPGS. Residues 1–57 are disordered; sequence MDISTRSKDPGSAERTAQKRKFPSPPHSSNGHSPQDTSTSPIKKKKKPGLLNSNNKE. A required for interaction with CCNT1 region spans residues 1-850; sequence MDISTRSKDP…QQQQQQQNQQ (850 aa). Ser12 participates in a covalent cross-link: Glycyl lysine isopeptide (Lys-Gly) (interchain with G-Cter in SUMO2). Position 24 is a phosphoserine (Ser24). Residues Lys56 and Lys70 each participate in a glycyl lysine isopeptide (Lys-Gly) (interchain with G-Cter in SUMO2) cross-link. An interaction with histone H3K4me0 region spans residues 75 to 268; the sequence is TDPVDVVPQD…YLAACQKRDN (194 aa). Residues 75-406 are interaction with histone H3K14ac; that stretch reads TDPVDVVPQD…VKLNFDMTAS (332 aa). The segment at 88 to 133 adopts a PHD-type zinc-finger fold; the sequence is DFYCWVCHREGQVLCCELCPRVYHAKCLRLTSEPEGDWFCPECEKI. The required for interaction with histone H3 and histone H4 stretch occupies residues 88-327; the sequence is DFYCWVCHRE…INNCYLMSKE (240 aa). Positions 91, 94, 103, 106, 111, 114, 127, and 130 each coordinate Zn(2+). The 108-residue stretch at 145–252 folds into the Bromo domain; it reads AMTMLTIEQL…KICEHEMNEI (108 aa). Zn(2+)-binding residues include Cys255, Cys258, and Cys274. Positions 277 to 327 constitute a PWWP domain; the sequence is PHPLVWAKLKGFPFWPAKALRDKDGQVDARFFGQHDRAWVPINNCYLMSKE. A Glycyl lysine isopeptide (Lys-Gly) (interchain with G-Cter in SUMO2) cross-link involves residue Lys390. Phosphothreonine is present on Thr404. Residue Ser406 is modified to Phosphoserine. The tract at residues 412-512 is disordered; it reads SKPVLSGGTG…TTKTDKTSTT (101 aa). At Lys413 the chain carries N6-acetyllysine; alternate. A Glycyl lysine isopeptide (Lys-Gly) (interchain with G-Cter in SUMO2); alternate cross-link involves residue Lys413. Residues Ser417, Ser425, and Ser432 each carry the phosphoserine modification. Over residues 433–442 the composition is skewed to polar residues; the sequence is PMSTNSSVHT. Ser444 is modified (phosphoserine). Lys453 participates in a covalent cross-link: Glycyl lysine isopeptide (Lys-Gly) (interchain with G-Cter in SUMO2). Ser460, Ser462, Ser465, Ser486, Ser490, and Ser495 each carry phosphoserine. The span at 472 to 489 shows a compositional bias: polar residues; that stretch reads STASPASTKTGQAGSLSG. Lys505 is covalently cross-linked (Glycyl lysine isopeptide (Lys-Gly) (interchain with G-Cter in SUMO2)). 2 positions are modified to phosphoserine: Ser514 and Ser523. A Glycyl lysine isopeptide (Lys-Gly) (interchain with G-Cter in SUMO2) cross-link involves residue Lys530. Thr541 carries the phosphothreonine modification. Ser547 bears the Phosphoserine mark. Residue Lys549 forms a Glycyl lysine isopeptide (Lys-Gly) (interchain with G-Cter in SUMO2) linkage. Position 563 is a phosphothreonine (Thr563). Residues 582 to 884 form a disordered region; it reads TAVEHSDSED…ITQSPSTSTI (303 aa). Composition is skewed to basic and acidic residues over residues 585–597 and 606–631; these read EHSDSEDSEKSDS and DEQKSKNEPEDTEDKEGCQMDKEPSA. Residues Lys611 and Lys645 each participate in a glycyl lysine isopeptide (Lys-Gly) (interchain with G-Cter in SUMO2) cross-link. Residues Ser652 and Ser655 each carry the phosphoserine modification. Residues 656 to 696 show a composition bias toward basic and acidic residues; it reads EKADPGAVKDKASPEPEKDFSEKAKPSPHPIKDKLKGKDET. A Glycyl lysine isopeptide (Lys-Gly) (interchain with G-Cter in SUMO2) cross-link involves residue Lys657. A phosphoserine mark is found at Ser668, Ser682, Ser707, Ser709, and Ser737. The segment covering 718–738 has biased composition (basic and acidic residues); that stretch reads GEDHSGREGRKNKKEPKEPSP. Residue Thr746 is modified to Phosphothreonine. A phosphoserine mark is found at Ser754 and Ser756. Positions 766-799 are enriched in low complexity; the sequence is SSAQTSAAGATATTSTSSTVTVTAPAPAATGSPV. The span at 818 to 832 shows a compositional bias: polar residues; it reads VWNSSSKFQTSSQKW. Over residues 835–857 the composition is skewed to low complexity; that stretch reads QKMQRQQQQQQQQNQQQQPQSSQ. A compositionally biased stretch (polar residues) spans 873-884; it reads KEITQSPSTSTI. Residues 875–1047 are required for homodimerization; it reads ITQSPSTSTI…YCCWNTSYCD (173 aa). Residues Cys1028, Cys1031, Cys1039, Cys1040, Cys1046, Cys1050, His1058, and Cys1062 each coordinate Zn(2+). The segment at 1028–1062 adopts an MYND-type zinc-finger fold; it reads CANCKKEAIFYCCWNTSYCDYPCQQAHWPEHMKSC. The tract at residues 1028–1062 is required for recruitment to DNA damage sites and for interaction with the NuRD complex, CHD4, HDAC1, HDAC2 and KDM1A; that stretch reads CANCKKEAIFYCCWNTSYCDYPCQQAHWPEHMKSC. The interval 1071-1186 is disordered; that stretch reads QEADAEVNTE…KESRLDTFWD (116 aa). Over residues 1085-1103 the composition is skewed to low complexity; that stretch reads SSQGSSSSTQSAPSETASA. Residues 1104–1116 are compositionally biased toward basic and acidic residues; the sequence is SKEKETSAEKSKE. Residue Lys1115 forms a Glycyl lysine isopeptide (Lys-Gly) (interchain with G-Cter in SUMO2) linkage. Position 1119 is a phosphoserine (Ser1119). The segment covering 1121 to 1140 has biased composition (polar residues); it reads LDLSGSRETPSSILLGSNQG. Phosphoserine is present on Ser1141. Residues 1147–1186 are interaction with PRKCB1; the sequence is NKSSWSSSDEKRGSTRSDHNTSTSTKSLLPKESRLDTFWD. Composition is skewed to basic and acidic residues over residues 1154–1165 and 1175–1186; these read SDEKRGSTRSDH and LPKESRLDTFWD.

Monomer and homodimer. Interacts with NuRD subcomplexes containing GATAD2A. Interacts with the histone deacetylase NuRD complex subunit CHD4; the interaction is direct, appears to occur with monomeric ZMYND8, and is increased following DNA damage. Interacts (via N-terminus) with the P-TEFb complex subunit CCNT1 (via central region); the interaction is direct and the association appears to occur between homodimeric ZMYND8 and the activated form of the P-TEFb complex. Interacts (via N-terminus) with DBN1 (via ADF-H domain); the interaction leads to sequestering of ZMYND8 in the cytoplasm. Interacts with the P-TEFb complex subunit CDK9; the association appears to occur between homodimeric ZMYND8 and the activated form of the P-TEFb complex. Interacts with EZH2; the interaction is dependent on the presence of chromatin. Interacts (via MYND domain) with the NuRD complex subunit GATAD2A. Interacts with histone H3 (via N-terminus) that is both methylated at 'Lys-4' (H3K4me1) and acetylated at 'Lys-14' (H3K14ac), with histone H3 (via N-terminus) unmodified at 'Lys-4' (H3K4me0) and acetylated at 'Lys-14' (H3K14ac), and with histone H3 (via N-terminus) di-methylated at 'Lys-36' (H3K36me2). Interacts (via Bromo domain) with histone H4 acetylated at 'Lys-16' (H4K16ac). Interacts with HDAC1. Interacts with HDAC2. Interacts with KDM1A. Interacts with KDM5C. Interacts with KDM5D. Interacts in vitro with PRKCB. Interacts with RNA polymerase II subunit POLR2A phosphorylated at 'Ser-5'. Interacts with ZNF592. Interacts with ZNF687. Does not interact with GATAD2B. Expressed in neurons (at protein level). Absent in astrocytes (at protein level). Expressed in all tissues examined with highest expression in brain, lung, pancreas, and placenta. Expressed in cutaneous T-cell lymphomas (CTCL).

It is found in the nucleus. Its subcellular location is the chromosome. The protein resides in the cytoplasm. Chromatin reader that recognizes dual histone modifications such as histone H3.1 dimethylated at 'Lys-36' and histone H4 acetylated at 'Lys-16' (H3.1K36me2-H4K16ac) and histone H3 methylated at 'Lys-4' and histone H4 acetylated at 'Lys-14' (H3K4me1-H3K14ac). May act as a transcriptional corepressor for KDM5D by recognizing the dual histone signature H3K4me1-H3K14ac. May also act as a transcriptional corepressor for KDM5C and EZH2. Recognizes acetylated histone H4 and recruits the NuRD chromatin remodeling complex to damaged chromatin for transcriptional repression and double-strand break repair by homologous recombination. Also activates transcription elongation by RNA polymerase II through recruiting the P-TEFb complex to target promoters. Localizes to H3.1K36me2-H4K16ac marks at all-trans-retinoic acid (ATRA)-responsive genes and positively regulates their expression. Promotes neuronal differentiation by associating with regulatory regions within the MAPT gene, to enhance transcription of a protein-coding MAPT isoform and suppress the non-coding MAPT213 isoform. Suppresses breast cancer, and prostate cancer cell invasion and metastasis. This Homo sapiens (Human) protein is MYND-type zinc finger-containing chromatin reader ZMYND8 (ZMYND8).